Reading from the N-terminus, the 397-residue chain is Acetate kinase (397 aa).

Position 7 (N7) interacts with Mg(2+). K14 provides a ligand contact to ATP. R91 contributes to the substrate binding site. D148 acts as the Proton donor/acceptor in catalysis. Residues H208 to G212, D283 to R285, and G331 to N335 contribute to the ATP site. A Mg(2+)-binding site is contributed by E384.

It belongs to the acetokinase family. Homodimer. Mg(2+) is required as a cofactor. The cofactor is Mn(2+).

The protein resides in the cytoplasm. The catalysed reaction is acetate + ATP = acetyl phosphate + ADP. It participates in metabolic intermediate biosynthesis; acetyl-CoA biosynthesis; acetyl-CoA from acetate: step 1/2. Catalyzes the formation of acetyl phosphate from acetate and ATP. Can also catalyze the reverse reaction. This is Acetate kinase from Syntrophomonas wolfei subsp. wolfei (strain DSM 2245B / Goettingen).